The following is a 449-amino-acid chain: Early 53 kDa protein (449 aa).

The tract at residues 1 to 68 is disordered; sequence MNRFFRENNI…CTSPAKPLEH (68 aa). Over residues 31–42 the composition is skewed to pro residues; it reads NSPPSPVRPPPK. Residues 379–399 form a C4-type zinc finger; the sequence is CKLCKKTKLYYKNPVLYCTKC.

The protein localises to the virion. The protein resides in the host cytoplasm. Its subcellular location is the host nucleus. It is found in the host cell membrane. Its function is as follows. May act as a packaging protein or as a structural component associated with intranuclear baculovirus virion assembly. The chain is Early 53 kDa protein (ME53) from Autographa californica nuclear polyhedrosis virus (AcMNPV).